The primary structure comprises 211 residues: MGQKVNPIGFRLGVIKTWDSKWYAEKDYAKLLHEDLKLRNFLKKRLYHSGVSKIEIERAAGKAKINIFTARPGLIIGKKGSEVETLKKELAKLTEKEVYLNIQEVRKPELDAQLVAENVAMQLERRIAFRRAMKKSVTSTLKFGAKGIRITCSGRLGGAEMSRTEWYREGRVPLHTLRADIDYGFAEAKTTYGIIGVKVLLFKGEVLSAKK.

In terms of domain architecture, KH type-2 spans 38-106 (LRNFLKKRLY…EVYLNIQEVR (69 aa)).

The protein belongs to the universal ribosomal protein uS3 family. Part of the 30S ribosomal subunit. Forms a tight complex with proteins S10 and S14.

In terms of biological role, binds the lower part of the 30S subunit head. Binds mRNA in the 70S ribosome, positioning it for translation. The protein is Small ribosomal subunit protein uS3 of Geobacter sp. (strain M21).